Reading from the N-terminus, the 412-residue chain is Tyrosine--tRNA ligase (412 aa).

Tyr-31 serves as a coordination point for L-tyrosine. Positions 36–45 (PTAPSLHIGH) match the 'HIGH' region motif. L-tyrosine is bound by residues Tyr-162 and Gln-166. Residues 222–226 (KIGKT) carry the 'KMSKS' region motif. Position 225 (Lys-225) interacts with ATP. Positions 345 to 412 (KRWLDVVVQL…KKKKQVIDLN (68 aa)) constitute an S4 RNA-binding domain.

This sequence belongs to the class-I aminoacyl-tRNA synthetase family. TyrS type 1 subfamily. In terms of assembly, homodimer.

The protein resides in the cytoplasm. The catalysed reaction is tRNA(Tyr) + L-tyrosine + ATP = L-tyrosyl-tRNA(Tyr) + AMP + diphosphate + H(+). Catalyzes the attachment of tyrosine to tRNA(Tyr) in a two-step reaction: tyrosine is first activated by ATP to form Tyr-AMP and then transferred to the acceptor end of tRNA(Tyr). This Chlamydia muridarum (strain MoPn / Nigg) protein is Tyrosine--tRNA ligase.